A 417-amino-acid chain; its full sequence is Serine hydroxymethyltransferase (417 aa).

(6S)-5,6,7,8-tetrahydrofolate-binding positions include L121 and 125–127; that span reads GHL. Position 229 is an N6-(pyridoxal phosphate)lysine (K229). 355–357 contacts (6S)-5,6,7,8-tetrahydrofolate; it reads SPF.

The protein belongs to the SHMT family. As to quaternary structure, homodimer. Pyridoxal 5'-phosphate serves as cofactor.

The protein localises to the cytoplasm. The enzyme catalyses (6R)-5,10-methylene-5,6,7,8-tetrahydrofolate + glycine + H2O = (6S)-5,6,7,8-tetrahydrofolate + L-serine. The protein operates within one-carbon metabolism; tetrahydrofolate interconversion. It participates in amino-acid biosynthesis; glycine biosynthesis; glycine from L-serine: step 1/1. Its function is as follows. Catalyzes the reversible interconversion of serine and glycine with tetrahydrofolate (THF) serving as the one-carbon carrier. This reaction serves as the major source of one-carbon groups required for the biosynthesis of purines, thymidylate, methionine, and other important biomolecules. Also exhibits THF-independent aldolase activity toward beta-hydroxyamino acids, producing glycine and aldehydes, via a retro-aldol mechanism. The protein is Serine hydroxymethyltransferase of Yersinia enterocolitica serotype O:8 / biotype 1B (strain NCTC 13174 / 8081).